The following is a 354-amino-acid chain: Ribosomal RNA large subunit methyltransferase M (354 aa).

S-adenosyl-L-methionine contacts are provided by residues Ser-183, 216 to 219, Asp-235, Asp-255, and Asp-271; that span reads SPGG. Catalysis depends on Lys-300, which acts as the Proton acceptor.

It belongs to the class I-like SAM-binding methyltransferase superfamily. RNA methyltransferase RlmE family. RlmM subfamily. In terms of assembly, monomer.

It localises to the cytoplasm. The catalysed reaction is cytidine(2498) in 23S rRNA + S-adenosyl-L-methionine = 2'-O-methylcytidine(2498) in 23S rRNA + S-adenosyl-L-homocysteine + H(+). Its function is as follows. Catalyzes the 2'-O-methylation at nucleotide C2498 in 23S rRNA. In Pseudomonas putida (strain ATCC 47054 / DSM 6125 / CFBP 8728 / NCIMB 11950 / KT2440), this protein is Ribosomal RNA large subunit methyltransferase M.